Consider the following 482-residue polypeptide: Alpha-ketoglutarate semialdehyde dehydrogenase (482 aa).

The interval 1–28 (MTDPSKNYVNGEWVTSETGETTEVTNPA) is disordered. The segment covering 11–25 (GEWVTSETGETTEVT) has biased composition (low complexity). Residue Cys-284 is part of the active site.

It belongs to the aldehyde dehydrogenase family. In terms of assembly, homotetramer.

The catalysed reaction is 2,5-dioxopentanoate + NADP(+) + H2O = 2-oxoglutarate + NADPH + 2 H(+). Its pathway is carbohydrate metabolism; D-xylose degradation. Its function is as follows. Alpha-ketoglutarate semialdehyde dehydrogenase involved in the degradation of D-xylose, a major component of hemicelluloses such as xylan. Catalyzes the fifth reaction in the xylose utilization pathway through dehydratation of alpha-ketoglutarate semialdehyde (2,5-dioxopentanoate) into alpha-ketoglutarate. The chain is Alpha-ketoglutarate semialdehyde dehydrogenase from Haloferax volcanii (strain ATCC 29605 / DSM 3757 / JCM 8879 / NBRC 14742 / NCIMB 2012 / VKM B-1768 / DS2) (Halobacterium volcanii).